The following is a 267-amino-acid chain: Neuferricin (267 aa).

The N-terminal stretch at 1–17 (MLKYLVALISMVLAVWT) is a signal peptide. In terms of domain architecture, Cytochrome b5 heme-binding spans 53–150 (LLTKEQLSLY…RDYTPVGKLI (98 aa)).

It belongs to the cytochrome b5 family. MAPR subfamily.

The protein resides in the secreted. Functionally, heme-binding protein which promotes neuronal but not astrocyte differentiation. This chain is Neuferricin (cyb5d2), found in Danio rerio (Zebrafish).